Reading from the N-terminus, the 1104-residue chain is Lon protease homolog, mitochondrial (1104 aa).

Residues 1–54 (MLRGQTLRWRAALQTPRSLILRPLFAPGGYNVGPRSVLETSRRFRSLPPSLRTF) constitute a mitochondrion transit peptide. 2 disordered regions span residues 41 to 192 (SRRF…KPSV) and 296 to 317 (SLIPPGDSTKSGNSEDKTTEKR). Basic and acidic residues-rich tracts occupy residues 64–104 (KPPP…DSSG) and 125–144 (KAADRDQRSVTEDAKREAEA). Low complexity predominate over residues 158-169 (SDSSSESKPSGS). Basic and acidic residues-rich tracts occupy residues 172–187 (GGDDGGKKGKKNDKAL) and 308–317 (NSEDKTTEKR). The Lon N-terminal domain maps to 199 to 451 (VMAIPIAKRP…KGLVVLKKEL (253 aa)). 604 to 611 (GPPGVGKT) contacts ATP. Residues 825 to 839 (AEGKAAQEESEKETG) show a composition bias toward basic and acidic residues. Residues 825-857 (AEGKAAQEESEKETGPIESTSEQEKATTENPRV) form a disordered region. The region spanning 891–1077 (TFPPGVTMGL…SEVFDILFAD (187 aa)) is the Lon proteolytic domain. Residues Ser-983 and Lys-1026 contribute to the active site.

It belongs to the peptidase S16 family. In terms of assembly, homohexamer or homoheptamer. Organized in a ring with a central cavity.

It localises to the mitochondrion matrix. It carries out the reaction Hydrolysis of proteins in presence of ATP.. In terms of biological role, ATP-dependent serine protease that mediates the selective degradation of misfolded, unassembled or oxidatively damaged polypeptides as well as certain short-lived regulatory proteins in the mitochondrial matrix. May also have a chaperone function in the assembly of inner membrane protein complexes. Participates in the regulation of mitochondrial gene expression and in the maintenance of the integrity of the mitochondrial genome. Binds to mitochondrial DNA in a site-specific manner. This chain is Lon protease homolog, mitochondrial (pim1), found in Emericella nidulans (strain FGSC A4 / ATCC 38163 / CBS 112.46 / NRRL 194 / M139) (Aspergillus nidulans).